The following is a 659-amino-acid chain: tRNA-guanine(15) transglycosylase (659 aa).

Asp84 functions as the Nucleophile in the catalytic mechanism. Residues Asp119 and Ala190 each coordinate substrate. Zn(2+) is bound by residues Cys273, Cys275, and Cys278. The PUA domain occupies 583–658; it reads KNRVVVNKDS…QAIKTRKGMK (76 aa).

Belongs to the archaeosine tRNA-ribosyltransferase family. Requires Zn(2+) as cofactor.

The catalysed reaction is guanosine(15) in tRNA + 7-cyano-7-deazaguanine = 7-cyano-7-carbaguanosine(15) in tRNA + guanine. It participates in tRNA modification; archaeosine-tRNA biosynthesis. Exchanges the guanine residue with 7-cyano-7-deazaguanine (preQ0) at position 15 in the dihydrouridine loop (D-loop) of archaeal tRNAs. In Methanobrevibacter smithii (strain ATCC 35061 / DSM 861 / OCM 144 / PS), this protein is tRNA-guanine(15) transglycosylase.